Here is an 898-residue protein sequence, read N- to C-terminus: Nitrate reductase [NAD(P)H] (898 aa).

A compositionally biased stretch (basic and acidic residues) spans 1–15 (MAASVENRRFTHHEP). Residues 1-65 (MAASVENRRF…SSSEDENEND (65 aa)) form a disordered region. Cysteine 180 contacts Mo-molybdopterin. Residues 528 to 603 (SKMFSMSEVK…LEDYRIGELI (76 aa)) enclose the Cytochrome b5 heme-binding domain. Heme-binding residues include histidine 563 and histidine 586. The FAD-binding FR-type domain occupies 642–754 (GAKIPTKLVY…KGPLGHVEYT (113 aa)). Residues 694 to 697 (RAYT), 711 to 715 (VVKIY), phenylalanine 716, phenylalanine 723, 728 to 730 (LMS), and threonine 781 each bind FAD.

This sequence belongs to the nitrate reductase family. In terms of assembly, homodimer. It depends on FAD as a cofactor. The cofactor is heme. Mo-molybdopterin serves as cofactor.

The enzyme catalyses nitrite + NAD(+) + H2O = nitrate + NADH + H(+). It catalyses the reaction nitrite + NADP(+) + H2O = nitrate + NADPH + H(+). Nitrate reductase is a key enzyme involved in the first step of nitrate assimilation in plants, fungi and bacteria. The chain is Nitrate reductase [NAD(P)H] (NIA1) from Betula pendula (European white birch).